We begin with the raw amino-acid sequence, 681 residues long: Chaperone protein htpG (681 aa).

The segment at 1–326 is a; substrate-binding; the sequence is MQKGNIGVTT…SPDIPLNVSR (326 aa). A b region spans residues 327–545; that stretch reads SYLQSDSNVK…YMRRMKEMAN (219 aa). Residues 546 to 681 form a c region; the sequence is IQAGMSFYGE…NFVKRSIELI (136 aa).

Belongs to the heat shock protein 90 family. Homodimer.

The protein resides in the cytoplasm. In terms of biological role, molecular chaperone. Has ATPase activity. This is Chaperone protein htpG from Bacteroides fragilis (strain YCH46).